Here is a 336-residue protein sequence, read N- to C-terminus: Probable RNA methyltransferase Anae109_4379 (336 aa).

Residue E86 is the Proton acceptor of the active site. In terms of domain architecture, Radical SAM core spans 93–322 (FDTHHTVCLS…PIVRRYSGGQ (230 aa)). C100 and C328 are oxidised to a cystine. [4Fe-4S] cluster-binding residues include C107, C111, and C114. S-adenosyl-L-methionine contacts are provided by residues 154–155 (GE), S186, and 209–211 (SLN). The S-methylcysteine intermediate role is filled by C328.

It belongs to the radical SAM superfamily. RlmN family. [4Fe-4S] cluster is required as a cofactor.

It is found in the cytoplasm. In Anaeromyxobacter sp. (strain Fw109-5), this protein is Probable RNA methyltransferase Anae109_4379.